Consider the following 145-residue polypeptide: Inner membrane protein YiaA (145 aa).

At 1–12 (MDNKISTYSPAF) the chain is on the cytoplasmic side. A helical membrane pass occupies residues 13–32 (SIVSWIALVGGIVTYLLGLW). Residues 33–41 (NAEMQLNEK) lie on the Periplasmic side of the membrane. The chain crosses the membrane as a helical span at residues 42–59 (GYYFAVLVLGLFSAASYQ). Topologically, residues 60–71 (KTVRDKYEGIPT) are cytoplasmic. A helical transmembrane segment spans residues 72 to 94 (TSIYYMTCLTVFIISVALLMVGL). The Periplasmic segment spans residues 95 to 98 (WNAT). A helical transmembrane segment spans residues 99 to 121 (LLLSEKGFYGLAFFLSLFGAVAV). Topologically, residues 122–145 (QKNIRDAGINPPKETQVTQEEYSE) are cytoplasmic.

It localises to the cell inner membrane. This chain is Inner membrane protein YiaA (yiaA), found in Escherichia coli (strain K12).